We begin with the raw amino-acid sequence, 409 residues long: WW domain-containing oxidoreductase (409 aa).

The tract at residues 1–23 (MIALPDTDSEDELPPGWEERATD) is disordered. 2 WW domains span residues 11–44 (DELPPGWEERATDDGTVCYVNQQGKTSQWTHPRT) and 52–86 (GELPLGWEKYYDEQGKRFMFLNKETQQRTNVDPRL). NADP(+) is bound at residue 128–134 (GANCGIG). Serine 257 lines the substrate pocket. The active-site Proton acceptor is the tyrosine 288.

It belongs to the short-chain dehydrogenases/reductases (SDR) family.

The protein resides in the cytoplasm. Its subcellular location is the mitochondrion. It is found in the golgi apparatus. It localises to the lysosome. In terms of biological role, putative oxidoreductase. May control genotoxic stress-induced cell death. May play a role in TGFB1 signaling and TGFB1-mediated cell death. May also play a role in tumor necrosis factor (TNF)-mediated cell death. May play a role in Wnt signaling. The chain is WW domain-containing oxidoreductase (Wwox) from Drosophila melanogaster (Fruit fly).